We begin with the raw amino-acid sequence, 217 residues long: Vesicle transport through interaction with t-SNAREs homolog 1A (217 aa).

Residues 1 to 192 lie on the Cytoplasmic side of the membrane; the sequence is MSSDFEGYEQ…GMLRRIIQNR (192 aa). Coiled coils occupy residues 31–92 and 112–178; these read PDEK…KRSR and ENQR…GKSS. Residues 193–213 traverse the membrane as a helical; Anchor for type IV membrane protein segment; sequence ILLVILGIIVVIAILTAIAFF. Over 214-217 the chain is Vesicular; the sequence is VKGH.

The protein belongs to the VTI1 family. Interacts with distinct SNARE complexes that contain either STX5 or STX6. Interacts with NAPA and, to a lesser extent, with NAPG. Identified in a complex containing STX6, STX12, VAMP4 and VTI1A. In terms of tissue distribution, widely expressed.

The protein localises to the golgi apparatus membrane. In terms of biological role, V-SNARE that mediates vesicle transport pathways through interactions with t-SNAREs on the target membrane. These interactions are proposed to mediate aspects of the specificity of vesicle trafficking and to promote fusion of the lipid bilayers. Involved in vesicular transport from the late endosomes to the trans-Golgi network. Along with VAMP7, involved in an non-conventional RAB1-dependent traffic route to the cell surface used by KCNIP1 and KCND2. May be concerned with increased secretion of cytokines associated with cellular senescence. The protein is Vesicle transport through interaction with t-SNAREs homolog 1A (Vti1a) of Mus musculus (Mouse).